Reading from the N-terminus, the 317-residue chain is Proline-rich protein 2 (317 aa).

The signal sequence occupies residues 1–16; the sequence is MLVVLFTVALLALSSA. The segment at 15–317 is disordered; sequence SAQGPREELQ…PPQGRPQGPQ (303 aa). Over residues 32–44 the composition is skewed to pro residues; the sequence is QRPPPSGSQPRPP. N46 is a glycosylation site (N-linked (GlcNAc...) asparagine). Composition is skewed to pro residues over residues 51–183 and 204–288; these read GPPP…PPAG and QSPP…PTQG. The span at 289 to 305 shows a compositional bias: low complexity; it reads PHPTGGPQQTPPLAGNP. Pro residues predominate over residues 306 to 317; sequence QGPPQGRPQGPQ.

Its subcellular location is the secreted. This chain is Proline-rich protein 2 (Prp2), found in Mus musculus (Mouse).